A 476-amino-acid chain; its full sequence is Protein PAL OF QUIRKY (476 aa).

The N-terminal stretch at 1-14 (MTTVSSAFATVAEG) is a signal peptide. Residues 204–256 (TRRTNSGTSGSGDGNGGICGQESMMLETNSSFGSTSSSVSSSNLPPIKSSGED) form a disordered region. The span at 212–222 (SGSGDGNGGIC) shows a compositional bias: gly residues. Residues 233–252 (SSFGSTSSSVSSSNLPPIKS) show a composition bias toward low complexity.

As to quaternary structure, homodimer. Interacts with QKY and SUB/SCM at the plasma membrane. In terms of tissue distribution, observed in seedlings, roots, shoots, leaves, stems, inflorescence and flowers.

The protein resides in the cell membrane. Its subcellular location is the endomembrane system. Its function is as follows. Collaboratively with SUB and QKY, regulates cell growth anisotropy during gynoecium development, thus linking together cell-cell communication and cellular growth. The protein is Protein PAL OF QUIRKY of Arabidopsis thaliana (Mouse-ear cress).